A 202-amino-acid polypeptide reads, in one-letter code: B-cell CLL/lymphoma 7 protein family member B (202 aa).

The interval 53–202 is disordered; sequence DSKEKEKSKS…PTVPQTASES (150 aa). The segment covering 90–99 has biased composition (polar residues); it reads ENSNQSSVSD. Residues 107–123 are compositionally biased toward low complexity; sequence SSTNSSPSPQQSESLSP. Residues Ser-114, Ser-118, Ser-120, Ser-122, Ser-127, Ser-148, and Ser-152 each carry the phosphoserine modification.

This sequence belongs to the BCL7 family. As to expression, ubiquitous.

In terms of biological role, positive regulator of apoptosis. Plays a role in the Wnt signaling pathway, negatively regulating the expression of Wnt signaling components CTNNB1 and HMGA1. Involved in cell cycle progression, maintenance of the nuclear structure and stem cell differentiation. May play a role in lung tumor development or progression. The chain is B-cell CLL/lymphoma 7 protein family member B (BCL7B) from Homo sapiens (Human).